The following is a 1034-amino-acid chain: Beta-galactosidase (1034 aa).

Substrate contacts are provided by asparagine 108 and aspartate 207. Aspartate 207 contacts Na(+). Mg(2+) contacts are provided by glutamate 423, histidine 425, and glutamate 468. Substrate-binding positions include glutamate 468 and 544 to 547 (EYAH). The active-site Proton donor is the glutamate 468. The active-site Nucleophile is the glutamate 544. Asparagine 604 lines the Mg(2+) pocket. Na(+) contacts are provided by phenylalanine 608 and asparagine 611. Positions 611 and 1010 each coordinate substrate.

It belongs to the glycosyl hydrolase 2 family. In terms of assembly, homotetramer. Requires Mg(2+) as cofactor. It depends on Na(+) as a cofactor.

The catalysed reaction is Hydrolysis of terminal non-reducing beta-D-galactose residues in beta-D-galactosides.. The protein is Beta-galactosidase of Klebsiella pneumoniae.